Consider the following 409-residue polypeptide: MDRLKSHLTVCFLPSVPFLILVSTLATAKSVTNSTLNGTNVVLGSVPVIIARTDHIIVKEGNSALINCSVYGIPDPQFKWYNSIGKLLKEEEDEKERGGGKWQMHDSGLLNITKVSFSDRGKYTCVASNIYGTVNNTVTLRVIFTSGDMGVYYMVVCLVAFTIVMVLNITRLCMMSSHLKKTEKAINEFFRTEGAEKLQKAFEIAKRIPIITSAKTLELAKVTQFKTMEFARYIEELARSVPLPPLIMNCRTIMEEIMEVVGLEEQGQNFVRHTPEGQEAADRDEVYTIPNSLKRSDSPAADSDASSLHEQPQQIAIKVSVHPQSKKEHADDQEGGQFEVKDVEETELSAEHSPETAEPSTDVTSTELTSEEPTPVEVPDKVLPPAYLEATEPAVTHDKNTCIIYESHV.

An N-terminal signal peptide occupies residues 1-28 (MDRLKSHLTVCFLPSVPFLILVSTLATA). The Extracellular segment spans residues 29–149 (KSVTNSTLNG…LRVIFTSGDM (121 aa)). N-linked (GlcNAc...) asparagine glycosylation is found at N33, N37, N67, N111, and N135. The region spanning 47-141 (PVIIARTDHI…GTVNNTVTLR (95 aa)) is the Ig-like C2-type domain. Residues C68 and C125 are joined by a disulfide bond. The helical transmembrane segment at 150–172 (GVYYMVVCLVAFTIVMVLNITRL) threads the bilayer. Topologically, residues 173–409 (CMMSSHLKKT…NTCIIYESHV (237 aa)) are cytoplasmic. Y287 carries the post-translational modification Phosphotyrosine; by EGFR. 2 disordered regions span residues 292–311 (SLKRSDSPAADSDASSLHEQ) and 320–385 (SVHP…VLPP). A phosphoserine mark is found at S298, S303, S306, and S307. Basic and acidic residues predominate over residues 339–355 (EVKDVEETELSAEHSPE). The segment covering 363 to 377 (VTSTELTSEEPTPVE) has biased composition (low complexity).

Highly expressed in testis.

It localises to the cell membrane. It is found in the nucleus. The protein resides in the cytoplasm. May participate in the nuclear signaling of EGFR and MAPK1/ERK2. May a have a role in metastasis. This chain is Microfibrillar-associated protein 3-like (MFAP3L), found in Homo sapiens (Human).